Reading from the N-terminus, the 582-residue chain is Formate--tetrahydrofolate ligase (582 aa).

65 to 72 contacts ATP; sequence TPLGEGKT.

It belongs to the formate--tetrahydrofolate ligase family.

It carries out the reaction (6S)-5,6,7,8-tetrahydrofolate + formate + ATP = (6R)-10-formyltetrahydrofolate + ADP + phosphate. It participates in one-carbon metabolism; tetrahydrofolate interconversion. In Vibrio campbellii (strain ATCC BAA-1116), this protein is Formate--tetrahydrofolate ligase.